Here is a 499-residue protein sequence, read N- to C-terminus: Probable mitochondrial-processing peptidase subunit alpha-2, chloroplastic/mitochondrial (499 aa).

The protein belongs to the peptidase M16 family. As to quaternary structure, heterodimer of alpha and beta subunits, forming the mitochondrial processing protease (MPP) in which subunit alpha is involved in substrate recognition and binding and subunit beta is the catalytic subunit. Component of the ubiquinol-cytochrome c oxidoreductase (cytochrome b-c1 complex, complex III, CIII), a multisubunit enzyme composed of 10 subunits. The complex is composed of 3 respiratory subunits cytochrome b (MT-CYB), cytochrome c1 (CYC1-1 or CYC1-2) and Rieske protein (UCR1-1 or UCR1-2), 2 core protein subunits MPPalpha1 (or MPPalpha2) and MPPB, and 5 low-molecular weight protein subunits QCR7-1 (or QCR7-2), UCRQ-1 (or UCRQ-2), QCR9, UCRY and probably QCR6-1 (or QCR6-2). The complex exists as an obligatory dimer and forms supercomplexes (SCs) in the inner mitochondrial membrane with NADH-ubiquinone oxidoreductase (complex I, CI), resulting in different assemblies (supercomplexes SCI(1)III(2) and SCI(2)III(4)). Interacts with TIM23-2.

It localises to the plastid. The protein resides in the chloroplast stroma. Its subcellular location is the mitochondrion matrix. It is found in the mitochondrion inner membrane. Substrate recognition and binding subunit of the essential mitochondrial processing protease (MPP), which cleaves the mitochondrial sequence off newly imported precursors proteins. Functionally, component of the ubiquinol-cytochrome c oxidoreductase, a multisubunit transmembrane complex that is part of the mitochondrial electron transport chain which drives oxidative phosphorylation. The respiratory chain contains 3 multisubunit complexes succinate dehydrogenase (complex II, CII), ubiquinol-cytochrome c oxidoreductase (cytochrome b-c1 complex, complex III, CIII) and cytochrome c oxidase (complex IV, CIV), that cooperate to transfer electrons derived from NADH and succinate to molecular oxygen, creating an electrochemical gradient over the inner membrane that drives transmembrane transport and the ATP synthase. The cytochrome b-c1 complex catalyzes electron transfer from ubiquinol to cytochrome c, linking this redox reaction to translocation of protons across the mitochondrial inner membrane, with protons being carried across the membrane as hydrogens on the quinol. In the process called Q cycle, 2 protons are consumed from the matrix, 4 protons are released into the intermembrane space and 2 electrons are passed to cytochrome c. The sequence is that of Probable mitochondrial-processing peptidase subunit alpha-2, chloroplastic/mitochondrial (MPPalpha2) from Arabidopsis thaliana (Mouse-ear cress).